The primary structure comprises 5207 residues: NBPF family member NBPF20 (5207 aa).

Olduvai domains follow at residues 5 to 77 (SREL…PSCP), 80 to 135 (SREL…LDVD), 136 to 228 (RTKK…RSKK), 229 to 321 (ERRR…PSCP), 324 to 379 (SREL…LDVD), 380 to 472 (RTKK…RSKK), 473 to 565 (ERRR…PSCP), 568 to 623 (SREL…LDVD), 624 to 716 (RTKK…RSKK), 717 to 809 (ERRR…PSCP), 812 to 867 (SREL…LDVD), 868 to 960 (RTKK…RSKK), 961 to 1053 (ERRR…PSCP), 1056 to 1111 (SREL…LDVD), 1112 to 1204 (RTKK…RSKK), 1205 to 1297 (ERRR…PSCP), 1300 to 1355 (SREL…LDVD), 1356 to 1448 (RTKK…RSKK), 1449 to 1541 (ERRR…PSCP), 1544 to 1599 (SREL…LDVD), 1600 to 1692 (RTKK…RSKK), 1693 to 1785 (ERRR…PSCP), 1788 to 1843 (SREL…LDVD), 1844 to 1936 (RTKK…RSKK), 1937 to 2029 (ERRR…PSCP), 2032 to 2087 (SREL…LDVD), 2088 to 2180 (RTKK…RSKK), 2181 to 2273 (ERRR…PSCP), 2276 to 2331 (SREL…LDVD), 2332 to 2424 (RTKK…RSKK), 2425 to 2517 (ERRR…PSCP), 2520 to 2575 (SREL…LDVD), 2576 to 2668 (RTKK…RSKK), 2669 to 2761 (ERRR…PSCP), 2764 to 2819 (SREL…LDVD), 2820 to 2912 (RTKK…RSKK), 2913 to 3005 (ERRR…PSCP), 3008 to 3063 (SREL…LDVD), 3064 to 3156 (RTKK…RSKK), 3157 to 3249 (ERRR…PSCP), 3252 to 3307 (SREL…LDVD), 3308 to 3400 (RTKK…RSKK), 3401 to 3493 (ERRR…PSCP), 3496 to 3551 (SREL…LDVD), 3552 to 3644 (RTKK…RSKK), 3645 to 3737 (ERRR…PSCP), 3740 to 3795 (SREL…LDVD), 3796 to 3888 (RTKK…RSKK), 3889 to 3981 (ERRR…PSCP), 3984 to 4039 (SREL…LDVD), 4040 to 4132 (RTKK…RSKK), 4133 to 4225 (ERRR…PSCP), 4228 to 4283 (SREL…LDVD), 4284 to 4376 (RTKK…RSKK), 4377 to 4452 (ERRR…LDVD), 4453 to 4545 (RTKK…RSKK), 4546 to 4621 (ERRR…LDVD), 4622 to 4713 (RTKK…PSCP), 4716 to 4771 (SREL…LDVD), 4772 to 4864 (RTKK…RSKK), 4865 to 4957 (ERRR…PSCP), 4960 to 5015 (SREL…LDVD), 5016 to 5108 (RTKK…RSKK), and 5109 to 5207 (KRRR…IFPQ). Disordered regions lie at residues 137–157 (TKKD…LSRE) and 215–256 (KGKG…LDEK). Positions 216-234 (GKGKKRRGRRSKKERRRGR) are enriched in basic residues. Disordered stretches follow at residues 381–403 (TKKD…RELL) and 459–513 (KGKG…DRSY). Over residues 460 to 478 (GKGKKRRGRRSKKERRRGR) the composition is skewed to basic residues. Over residues 492–502 (LSRELLDEKGP) the composition is skewed to basic and acidic residues. Disordered stretches follow at residues 625-647 (TKKD…RELL) and 703-744 (KGKG…LDEK). Residues 704–722 (GKGKKRRGRRSKKERRRGR) show a composition bias toward basic residues. Disordered regions lie at residues 869–891 (TKKD…RELL) and 947–1001 (KGKG…DRSY). Residues 948-966 (GKGKKRRGRRSKKERRRGR) are compositionally biased toward basic residues. A compositionally biased stretch (basic and acidic residues) spans 980–990 (LSRELLDEKGP). 2 disordered regions span residues 1113-1135 (TKKD…RELL) and 1191-1245 (KGKG…DRSY). Residues 1192-1210 (GKGKKRRGRRSKKERRRGR) show a composition bias toward basic residues. The span at 1224–1234 (LSRELLDEKGP) shows a compositional bias: basic and acidic residues. 2 disordered regions span residues 1357–1379 (TKKD…RELL) and 1435–1489 (KGKG…DRSY). Basic residues predominate over residues 1436–1454 (GKGKKRRGRRSKKERRRGR). Basic and acidic residues predominate over residues 1468–1478 (LSRELLDEKGP). Disordered regions lie at residues 1601-1623 (TKKD…RELL) and 1679-1733 (KGKG…DRSY). Over residues 1680-1698 (GKGKKRRGRRSKKERRRGR) the composition is skewed to basic residues. Residues 1712 to 1722 (LSRELLDEKGP) show a composition bias toward basic and acidic residues. 2 disordered regions span residues 1845–1867 (TKKD…RELL) and 1923–1964 (KGKG…LDEK). Positions 1924-1942 (GKGKKRRGRRSKKERRRGR) are enriched in basic residues. 2 disordered regions span residues 2089-2111 (TKKD…RELL) and 2167-2208 (KGKG…LDEK). Residues 2168-2186 (GKGKKRRGRRSKKERRRGR) show a composition bias toward basic residues. Disordered regions lie at residues 2333-2355 (TKKD…RELL) and 2411-2452 (KGKG…LDEK). A compositionally biased stretch (basic residues) spans 2412–2430 (GKGKKRRGRRSKKERRRGR). 2 disordered regions span residues 2577–2599 (TKKD…RELL) and 2655–2709 (KGKG…DRSY). Positions 2656–2674 (GKGKKRRGRRSKKERRRGR) are enriched in basic residues. A compositionally biased stretch (basic and acidic residues) spans 2688–2698 (LSRELLDEKGP). Disordered stretches follow at residues 2821-2843 (TKKD…RELL) and 2899-2953 (KGKG…DRSY). Residues 2900–2918 (GKGKKRRGRRSKKERRRGR) are compositionally biased toward basic residues. Positions 2932-2942 (LSRELLDEKGP) are enriched in basic and acidic residues. Disordered stretches follow at residues 3065-3087 (TKKD…RELL) and 3143-3197 (KGKG…DRSY). The segment covering 3144–3162 (GKGKKRRGRRSKKERRRGR) has biased composition (basic residues). Residues 3176 to 3186 (LSRELLDEKGP) are compositionally biased toward basic and acidic residues. 2 disordered regions span residues 3309-3331 (TKKD…RELL) and 3387-3441 (KGKG…DRSY). Positions 3388–3406 (GKGKKRRGRRSKKERRRGR) are enriched in basic residues. Residues 3420-3430 (LSRELLDEKGP) are compositionally biased toward basic and acidic residues. Disordered stretches follow at residues 3553 to 3575 (TKKD…RELL) and 3631 to 3672 (KGKG…LDEK). Residues 3632 to 3650 (GKGKKRRGRRSKKERRRGR) are compositionally biased toward basic residues. Disordered regions lie at residues 3797–3819 (TKKD…RELL) and 3875–3916 (KGKG…LDEK). Over residues 3876–3894 (GKGKKRRGRRSKKERRRGR) the composition is skewed to basic residues. Disordered regions lie at residues 4041-4063 (TKKD…RELL) and 4119-4160 (KGKG…LDEK). Basic residues predominate over residues 4120 to 4138 (GKGKKRRGRRSKKERRRGR). 4 disordered regions span residues 4285–4307 (TKKD…RELL), 4361–4404 (EKKG…LDEK), 4453–4474 (RTKK…LSRE), and 4530–4573 (EKKG…LDEK). Residues 4364–4382 (GKGKKRRGRRSKKERRRGR) are compositionally biased toward basic residues. Basic residues predominate over residues 4533–4551 (GKGKKRRGRRSKKERRRGR). 2 disordered regions span residues 4773–4793 (TKKD…LSRE) and 4851–4889 (KGKG…RELL). Residues 4852–4870 (GKGKKRRGRRSKKERRRGR) show a composition bias toward basic residues. Disordered stretches follow at residues 5017–5037 (TKKD…LSRE) and 5094–5128 (KKGK…CPRL). A compositionally biased stretch (basic residues) spans 5096–5114 (GKGKKRRGRRSKKKRRRGR).

Belongs to the NBPF family.

The protein resides in the cytoplasm. The chain is NBPF family member NBPF20 from Homo sapiens (Human).